The sequence spans 87 residues: Lipid-anchored plasma membrane protein uvi15 (87 aa).

Residues 1–64 (MSAQQFYGDK…MYVQQPQASD (64 aa)) are disordered. Positions 18 to 41 (QQAYGGPNYYPPQQNYPQQGYAPP) are enriched in low complexity.

Belongs to the CYSTM1 family. Post-translationally, palmitoylated.

Its subcellular location is the cell membrane. It is found in the cell tip. Required for the maintenance of viability of cells in stationary phase and in starvation conditions. This is Lipid-anchored plasma membrane protein uvi15 (uvi15) from Schizosaccharomyces pombe (strain 972 / ATCC 24843) (Fission yeast).